The following is a 413-amino-acid chain: Multidrug resistance protein MdtA (413 aa).

Residues 1–20 form the signal peptide; that stretch reads MKGSNTFRWAIAIGVVVAAA. Disordered regions lie at residues 31–57 and 391–413; these read SPTA…RDGP and EPQT…GARA. Basic and acidic residues predominate over residues 397-413; the sequence is ADEKSPSRHEGQKGARA.

This sequence belongs to the membrane fusion protein (MFP) (TC 8.A.1) family. As to quaternary structure, part of a tripartite efflux system composed of MdtA, MdtB and MdtC.

The protein resides in the cell inner membrane. This Salmonella paratyphi C (strain RKS4594) protein is Multidrug resistance protein MdtA.